The following is a 98-amino-acid chain: Small ribosomal subunit protein bS6 (98 aa).

It belongs to the bacterial ribosomal protein bS6 family.

Binds together with bS18 to 16S ribosomal RNA. In Staphylococcus carnosus (strain TM300), this protein is Small ribosomal subunit protein bS6.